The following is a 335-amino-acid chain: 2-acylglycerol O-acyltransferase 2-A (335 aa).

The next 2 membrane-spanning stretches (helical) occupy residues 24-44 (WVFS…VLLF) and 47-67 (FWII…TPSK).

Belongs to the diacylglycerol acyltransferase family.

The protein resides in the endoplasmic reticulum membrane. The protein localises to the cytoplasm. Its subcellular location is the perinuclear region. It carries out the reaction a 2-acylglycerol + an acyl-CoA = a 1,2-diacylglycerol + CoA. It catalyses the reaction a 2-acylglycerol + an acyl-CoA = a 1,2-diacyl-sn-glycerol + CoA. The enzyme catalyses a 2-acylglycerol + an acyl-CoA = a 2,3-diacyl-sn-glycerol + CoA. The catalysed reaction is a 1-acylglycerol + an acyl-CoA = a 1,2-diacylglycerol + CoA. It carries out the reaction a 1-acylglycerol + an acyl-CoA = a 1,3-diacylglycerol + CoA. It catalyses the reaction 1-O-alkylglycerol + an acyl-CoA = 1-O-alkyl-3-acylglycerol + CoA. The enzyme catalyses an acyl-CoA + a 1,2-diacyl-sn-glycerol = a triacyl-sn-glycerol + CoA. The protein operates within glycerolipid metabolism; triacylglycerol biosynthesis. Catalyzes the formation of diacylglycerol from 2-monoacylglycerol and fatty acyl-CoA. Functionally, involved in glycerolipid synthesis and lipid metabolism. Catalyzes the formation of diacylglycerol, the precursor of triacylglycerol, by transferring the acyl chain of a fatty acyl-CoA to a monoacylglycerol. Plays a central role in absorption of dietary fat in the small intestine by catalyzing the resynthesis of triacylglycerol in enterocytes. Has a preference toward monoacylglycerols containing unsaturated fatty acids in an order of C18:3 &gt; C18:2 &gt; C18:1 &gt; C18:0 at sn-2. Able to use 1-monoalkylglycerol (1-MAkG, 1-O-alkylglycerol) as an acyl acceptor for the synthesis of monoalkyl-monoacylglycerol (MAMAG, 1-O-alkyl-3-acylglycerol or 1-O-alkyl-2-acylglycerol) and subsequently, with lower efficiency, may add another acyl chain producing monoalkyl-diacylglycerol (MADAG, 1-O-alkyl-2,3-diacylglycerol). Possesses weak but significant activity with diacylglycerol as substrate, producing triacylglycerol (triacyl-sn-glycerol). The chain is 2-acylglycerol O-acyltransferase 2-A (mogat2-a) from Xenopus laevis (African clawed frog).